Consider the following 262-residue polypeptide: uncharacterized protein (262 aa).

2 disordered regions span residues 1-30 (MGKK…KKEK) and 232-262 (EEEE…DMEE). Composition is skewed to acidic residues over residues 9 to 21 (NEDG…ETES), 232 to 245 (EEEE…EETD), and 253 to 262 (EEDEDEDMEE).

This is an uncharacterized protein from Caenorhabditis elegans.